We begin with the raw amino-acid sequence, 136 residues long: uncharacterized protein (136 aa).

This is an uncharacterized protein from Bacillus anthracis.